The chain runs to 546 residues: Cytokine-like nuclear factor N-PAC (546 aa).

The region spanning 8 to 66 is the PWWP domain; that stretch reads LGDLVWGKLGRYPPWPGKIVNPPKDLKKPRGKKCFFVKFFGTEDHAWIKVEQLKPYHAH. Composition is skewed to basic and acidic residues over residues 91 to 145 and 161 to 181; these read RRAK…EGKK and RAQE…KDLT. Positions 91 to 187 are disordered; the sequence is RRAKGKDQTS…KDLTIPESST (97 aa). Position 130 is a phosphoserine (Ser-130). A Glycyl lysine isopeptide (Lys-Gly) (interchain with G-Cter in SUMO2) cross-link involves residue Lys-135. Residue Ser-166 is modified to Phosphoserine. Residues 167-179 constitute a DNA-binding region (a.T hook); the sequence is PRKRGRPPKDEKD. Residues Lys-175, Lys-178, Lys-200, and Lys-210 each participate in a glycyl lysine isopeptide (Lys-Gly) (interchain with G-Cter in SUMO2) cross-link. The tract at residues 213 to 216 is interaction with histone H3; the sequence is DPHF. An interaction with KDM1B region spans residues 215–224; the sequence is HFHHFLLSQT. Glycyl lysine isopeptide (Lys-Gly) (interchain with G-Cter in SUMO2) cross-links involve residues Lys-226, Lys-236, Lys-239, and Lys-268. The dehydrogenase domain stretch occupies residues 260–546; the sequence is GSITPTDKKI…MSAVYRAYIH (287 aa). 270-284 contacts NAD(+); sequence GFLGLGLMGSGIVSN. Lys-301 is covalently cross-linked (Glycyl lysine isopeptide (Lys-Gly) (interchain with G-Cter in SUMO2)). NAD(+) is bound by residues Thr-355 and Lys-498. Ser-533 is modified (phosphoserine).

Belongs to the HIBADH-related family. NP60 subfamily. In terms of assembly, homotetramere. Interacts with MAPK14. Interacts with KDM1B at nucleosomes; this interaction stimulates H3K4me1 and H3K4me2 demethylation. Binds to mononucleosomes. Interacts with GATA4; the interaction is required for a synergistic activation of GATA4 target genes transcription.

Its subcellular location is the nucleus. It is found in the chromosome. In terms of biological role, cytokine-like nuclear factor with chromatin gene reader activity involved in chromatin modification and regulation of gene expression. Acts as a nucleosome-destabilizing factor that is recruited to genes during transcriptional activation. Recognizes and binds histone H3 without a preference for specific epigenetic markers and also binds DNA. Interacts with KDM1B and promotes its histone demethylase activity by facilitating the capture of H3 tails, they form a multifunctional enzyme complex that modifies transcribed chromatin and facilitates Pol II transcription through nucleosomes. Stimulates the acetylation of 'Lys-56' of nucleosomal histone H3 (H3K56ac) by EP300. With GATA4, co-binds a defined set of heart development genes and coregulates their expression during cardiomyocyte differentiation. Regulates p38 MAP kinase activity by mediating stress activation of MAPK14/p38alpha and specifically regulating MAPK14 signaling. Indirectly promotes phosphorylation of MAPK14 and activation of ATF2. The phosphorylation of MAPK14 requires upstream activity of MAP2K4 and MAP2K6. This Mus musculus (Mouse) protein is Cytokine-like nuclear factor N-PAC.